The sequence spans 792 residues: Phenylalanine--tRNA ligase beta subunit (792 aa).

The tRNA-binding domain maps to 39–147 (GESLGQVVVA…DDAPVGQALA (109 aa)). Residues 400–475 (PQPVHIRLRR…RIHGYDRVPT (76 aa)) enclose the B5 domain. Asp453, Asp459, Glu462, and Glu463 together coordinate Mg(2+). One can recognise an FDX-ACB domain in the interval 698–791 (SRFPSVRRDL…IEREHRARIR (94 aa)).

This sequence belongs to the phenylalanyl-tRNA synthetase beta subunit family. Type 1 subfamily. Tetramer of two alpha and two beta subunits. Mg(2+) is required as a cofactor.

The protein resides in the cytoplasm. The catalysed reaction is tRNA(Phe) + L-phenylalanine + ATP = L-phenylalanyl-tRNA(Phe) + AMP + diphosphate + H(+). The polypeptide is Phenylalanine--tRNA ligase beta subunit (Xanthomonas axonopodis pv. citri (strain 306)).